A 243-amino-acid chain; its full sequence is Homeobox protein goosecoid isoform B (243 aa).

Positions 148–207 (KRRHRTIFTDEQLEALENLFQETKYPDVGTREQLARRVHLREEKVEVWFKNRRAKWRRQK) form a DNA-binding region, homeobox. The interval 201–243 (AKWRRQKRSSSEESENAQKWNKSSKNSAEKRDEQAKSDLDSDS) is disordered. Residues 217–226 (AQKWNKSSKN) are compositionally biased toward polar residues. Residues 227-243 (SAEKRDEQAKSDLDSDS) show a composition bias toward basic and acidic residues.

Belongs to the paired homeobox family. Bicoid subfamily.

It localises to the nucleus. Functionally, plays a central role in executing Spemann's organizer phenomenon (the dorsal blastopore lip of the early Xenopus laevis gastrula can organize a complete secondary body axis when transplanted to another embryo). The sequence is that of Homeobox protein goosecoid isoform B (gsc-b) from Xenopus laevis (African clawed frog).